The primary structure comprises 382 residues: Proton extrusion protein PxcA (382 aa).

4 helical membrane-spanning segments follow: residues 156 to 176, 257 to 277, 305 to 325, and 340 to 360; these read TLISLKVLLLLILVPLLVQQV, AVKNVLADISATIAFVVVCLF, IILFTDIFVGFHSPEGWTVLL, and FILLFIATFPVILATIFKYWI.

This sequence belongs to the CemA family.

The protein resides in the cell inner membrane. Its function is as follows. Required for H(+) efflux immediately after light irradiation to form a rapid H(+) concentration gradient across the thylakoid membranes. Together with PxcL, contributes to transient H(+) uptake following dark to light transition. This chain is Proton extrusion protein PxcA, found in Synechococcus sp. (strain CC9311).